Reading from the N-terminus, the 420-residue chain is Phosphoglycerate kinase (420 aa).

(2R)-3-phosphoglycerate-binding residues include valine 26, aspartate 27, tyrosine 28, asparagine 29, glutamine 42, arginine 43, serine 66, histidine 67, glycine 69, arginine 70, leucine 125, arginine 126, histidine 173, and arginine 174. At tyrosine 199 the chain carries Phosphotyrosine. The residue at position 206 (serine 206) is a Phosphoserine. The interval 209–228 (KPFLAILGGAKVSDKIKLIE) is calmodulin binding. An ADP-binding site is contributed by glycine 217. Glycine 217 provides a ligand contact to CDP. Alanine 218 and lysine 219 together coordinate AMP. ATP is bound at residue alanine 218. Alanine 218 contacts Mg(2+). Aspartate 222 serves as a coordination point for CDP. Aspartate 222 contacts Mg(2+). Lysine 223 serves as a coordination point for AMP. Position 223 (lysine 223) interacts with ATP. Glycine 241 lines the ADP pocket. Residue glycine 241 coordinates CDP. AMP-binding residues include glycine 242 and glycine 316. Residues glycine 242 and glycine 316 each coordinate ATP. 2 residues coordinate CDP: glycine 341 and phenylalanine 346. Residue phenylalanine 346 participates in ADP binding. Residue glutamate 347 participates in AMP binding. The ATP site is built by glutamate 347, aspartate 378, and threonine 379. Aspartate 378 provides a ligand contact to Mg(2+). Serine 393 carries the phosphoserine modification.

The protein belongs to the phosphoglycerate kinase family. Monomer. Interacts with calmodulin in the presence of Ca(2+). It depends on Mg(2+) as a cofactor.

The protein resides in the cytoplasm. It catalyses the reaction (2R)-3-phosphoglycerate + ATP = (2R)-3-phospho-glyceroyl phosphate + ADP. Its pathway is carbohydrate degradation; glycolysis; pyruvate from D-glyceraldehyde 3-phosphate: step 2/5. The polypeptide is Phosphoglycerate kinase (Dictyostelium discoideum (Social amoeba)).